Consider the following 540-residue polypeptide: CUB domain-containing protein 2 (540 aa).

Residues 1–22 (MLAEWGACLLLAVALLGPGLQA) form the signal peptide. Topologically, residues 23 to 516 (QAMEGVKCGG…VSMVAQDTSD (494 aa)) are extracellular. Cystine bridges form between cysteine 30-cysteine 56, cysteine 83-cysteine 106, cysteine 145-cysteine 171, cysteine 198-cysteine 218, cysteine 257-cysteine 283, and cysteine 314-cysteine 336. CUB domains are found at residues 30 to 143 (CGGV…YQKD), 145 to 255 (CGGV…YFSG), and 257 to 373 (CQEV…YIGV). Residue asparagine 40 is glycosylated (N-linked (GlcNAc...) asparagine). Asparagine 267 is a glycosylation site (N-linked (GlcNAc...) asparagine). 3 N-linked (GlcNAc...) asparagine glycosylation sites follow: asparagine 377, asparagine 435, and asparagine 436. Residues 517–537 (IVFLGLCILAGILMVIAIVVL) form a helical membrane-spanning segment. Residues 538–540 (MLL) lie on the Cytoplasmic side of the membrane.

The protein resides in the membrane. In Homo sapiens (Human), this protein is CUB domain-containing protein 2 (CDCP2).